The primary structure comprises 329 residues: Glutamyl-tRNA reductase (329 aa).

Substrate contacts are provided by residues 51 to 54 (TCLR), S99, 104 to 106 (EDQ), and Q110. C52 (nucleophile) is an active-site residue. 179 to 184 (GIGELA) provides a ligand contact to NADP(+).

Belongs to the glutamyl-tRNA reductase family. Homodimer.

It carries out the reaction (S)-4-amino-5-oxopentanoate + tRNA(Glu) + NADP(+) = L-glutamyl-tRNA(Glu) + NADPH + H(+). The protein operates within porphyrin-containing compound metabolism; protoporphyrin-IX biosynthesis; 5-aminolevulinate from L-glutamyl-tRNA(Glu): step 1/2. Catalyzes the NADPH-dependent reduction of glutamyl-tRNA(Glu) to glutamate 1-semialdehyde (GSA). The protein is Glutamyl-tRNA reductase of Fusobacterium nucleatum subsp. nucleatum (strain ATCC 25586 / DSM 15643 / BCRC 10681 / CIP 101130 / JCM 8532 / KCTC 2640 / LMG 13131 / VPI 4355).